We begin with the raw amino-acid sequence, 105 residues long: Nucleoid-associated protein EAT1b_1710 (105 aa).

Residues 1–16 (MRGMGNMNNMMKQMQK) are compositionally biased toward low complexity. The tract at residues 1-26 (MRGMGNMNNMMKQMQKMQKDMAKAQE) is disordered. Residues 17 to 26 (MQKDMAKAQE) show a composition bias toward basic and acidic residues.

Belongs to the YbaB/EbfC family. Homodimer.

It is found in the cytoplasm. The protein resides in the nucleoid. Functionally, binds to DNA and alters its conformation. May be involved in regulation of gene expression, nucleoid organization and DNA protection. This chain is Nucleoid-associated protein EAT1b_1710, found in Exiguobacterium sp. (strain ATCC BAA-1283 / AT1b).